A 747-amino-acid polypeptide reads, in one-letter code: Phosphoribosylformylglycinamidine synthase subunit PurL (747 aa).

His-46 is an active-site residue. 2 residues coordinate ATP: Tyr-49 and Lys-88. Residue Glu-90 participates in Mg(2+) binding. Residues Ser-91–His-94 and Arg-113 contribute to the substrate site. The Proton acceptor role is filled by His-92. Asp-114 contributes to the Mg(2+) binding site. Gln-237 contributes to the substrate binding site. A Mg(2+)-binding site is contributed by Asp-265. Glu-309–Gln-311 is a binding site for substrate. The ATP site is built by Asp-493 and Gly-530. Asn-531 serves as a coordination point for Mg(2+). Ser-533 is a substrate binding site.

The protein belongs to the FGAMS family. Monomer. Part of the FGAM synthase complex composed of 1 PurL, 1 PurQ and 2 PurS subunits.

The protein localises to the cytoplasm. It carries out the reaction N(2)-formyl-N(1)-(5-phospho-beta-D-ribosyl)glycinamide + L-glutamine + ATP + H2O = 2-formamido-N(1)-(5-O-phospho-beta-D-ribosyl)acetamidine + L-glutamate + ADP + phosphate + H(+). Its pathway is purine metabolism; IMP biosynthesis via de novo pathway; 5-amino-1-(5-phospho-D-ribosyl)imidazole from N(2)-formyl-N(1)-(5-phospho-D-ribosyl)glycinamide: step 1/2. Part of the phosphoribosylformylglycinamidine synthase complex involved in the purines biosynthetic pathway. Catalyzes the ATP-dependent conversion of formylglycinamide ribonucleotide (FGAR) and glutamine to yield formylglycinamidine ribonucleotide (FGAM) and glutamate. The FGAM synthase complex is composed of three subunits. PurQ produces an ammonia molecule by converting glutamine to glutamate. PurL transfers the ammonia molecule to FGAR to form FGAM in an ATP-dependent manner. PurS interacts with PurQ and PurL and is thought to assist in the transfer of the ammonia molecule from PurQ to PurL. The protein is Phosphoribosylformylglycinamidine synthase subunit PurL of Deinococcus radiodurans (strain ATCC 13939 / DSM 20539 / JCM 16871 / CCUG 27074 / LMG 4051 / NBRC 15346 / NCIMB 9279 / VKM B-1422 / R1).